The chain runs to 598 residues: Probable translation initiation factor IF-2 (598 aa).

One can recognise a tr-type G domain in the interval 3–225 (LRCPIVSVLG…GLAQKFLEQK (223 aa)). Residues 12 to 19 (GHVDHGKT) are G1. 12–19 (GHVDHGKT) contacts GTP. The segment at 37–41 (GITQH) is G2. The G3 stretch occupies residues 76–79 (DTPG). GTP contacts are provided by residues 76–80 (DTPGH) and 130–133 (NKLD). The tract at residues 130 to 133 (NKLD) is G4. Residues 200–202 (SAI) form a G5 region.

This sequence belongs to the TRAFAC class translation factor GTPase superfamily. Classic translation factor GTPase family. IF-2 subfamily.

Functionally, function in general translation initiation by promoting the binding of the formylmethionine-tRNA to ribosomes. Seems to function along with eIF-2. The protein is Probable translation initiation factor IF-2 of Methanococcus vannielii (strain ATCC 35089 / DSM 1224 / JCM 13029 / OCM 148 / SB).